The following is a 473-amino-acid chain: Putative tyrosine recombinase XerC (473 aa).

Positions 4-82 (MTLPELTQEY…HLRTVYRYAM (79 aa)) constitute a Core-binding (CB) domain. One can recognise a Tyr recombinase domain in the interval 118–305 (RNWLRFLVQE…DYDLMREVMN (188 aa)). Residues Arg156, Lys183, His256, Arg259, and His283 contribute to the active site. Catalysis depends on Tyr292, which acts as the O-(3'-phospho-DNA)-tyrosine intermediate. Residues 341-352 (SGTELQPATTES) show a composition bias toward polar residues. The interval 341–365 (SGTELQPATTESSEAKKADDTASNP) is disordered.

Belongs to the 'phage' integrase family.

Its subcellular location is the cytoplasm. Site-specific tyrosine recombinase, which acts by catalyzing the cutting and rejoining of the recombining DNA molecules. This chain is Putative tyrosine recombinase XerC, found in Pseudomonas syringae.